The sequence spans 1190 residues: Pumilio homolog 1 (1190 aa).

Disordered stretches follow at residues 38-74 (LTSG…GVAG), 491-531 (SNSA…QQTD), 611-675 (ANGP…NSSL), and 744-777 (GPVG…LNLG). Composition is skewed to low complexity over residues 491–508 (SNSA…GQQQ), 518–531 (PLTP…QQTD), 628–675 (QQPQ…NSSL), and 765–777 (LSSH…LNLG). A PUM-HD domain is found at 830–1172 (GRSRLLEDFR…HILAKLEKYY (343 aa)). 8 Pumilio repeats span residues 850–885 (EIAG…LVFN), 886–921 (EILQ…ALAE), 922–959 (RIRG…EMVR), 960–995 (ELDG…FIID), 996–1031 (AFKS…PILE), 1032–1067 (ELHQ…KIVA), 1068–1103 (EIRG…MLID), and 1107–1146 (TMND…IVMH). Residues 865-869 (SRFIQ) are adenine-nucleotide binding in RNA target. The tract at residues 901-905 (NYVIQ) is uracil-nucleotide binding in RNA target. Residues 937–941 (CRVIQ) form an adenine-nucleotide binding in RNA target region. Residues 975 to 979 (NHVVQ) are non-specific-nucleotide binding in RNA target. The tract at residues 1011-1015 (CRVIQ) is adenine-nucleotide binding in RNA target. Positions 1047–1051 (NYVIQ) are uracil-nucleotide binding in RNA target. A guanine-nucleotide binding in RNA target region spans residues 1083 to 1087 (SNVVE). Residues 1126-1130 (NYVVQ) are uracil-nucleotide binding in RNA target.

Interacts with cpeb1-a; interacts with unphosphorylated cpeb1-a but not phosphorylated. Component of a complex with papd4, sympk, tacc3, parn, dazl and cpeb1. Post-translationally, phosphorylated. Phosphorylation takes place at the time of dissociation of cpeb1-a from pum1 and the translational activation of ccnb1 mRNA. In terms of tissue distribution, present in oocytes (at protein level).

The protein localises to the cytoplasm. It is found in the P-body. The protein resides in the cytoplasmic granule. Functionally, sequence-specific RNA-binding protein that acts as a post-transcriptional repressor by binding the 3'-UTR of mRNA targets. Binds to an RNA consensus sequence, the Pumilio Response Element (PRE), 5'-UGUANAUA-3', that is related to the Nanos Response Element (NRE). Mediates post-transcriptional repression of transcripts via different mechanisms: acts via direct recruitment of deadenylase complexes leading to translational inhibition and mRNA degradation. Also mediates deadenylation-independent repression by promoting accessibility of miRNAs. Acts as a post-transcriptional repressor of ccnb1 mRNA during oocyte maturation. The sequence is that of Pumilio homolog 1 from Xenopus laevis (African clawed frog).